Consider the following 907-residue polypeptide: Potassium channel AKT3 (907 aa).

Over 1-75 the chain is Cytoplasmic; the sequence is MPTTKCAVPL…YDRRYELWNN (75 aa). Residues 76-96 form a helical membrane-spanning segment; it reads YLILLVVYSAWVTPFEFGFVP. Residues 97–102 lie on the Extracellular side of the membrane; it reads EPAGAL. The helical transmembrane segment at 103-123 threads the bilayer; the sequence is AAADNAVNAFFAVDIVLTFFV. The Cytoplasmic segment spans residues 124–146; the sequence is AYTDPKTFLLQDDPRKIALRYIT. A helical transmembrane segment spans residues 147–167; it reads TWFVLDVVATIPTELARRILP. Topologically, residues 168–174 are extracellular; the sequence is PDLRSYG. The chain crosses the membrane as a helical; Voltage-sensor span at residues 175-195; the sequence is FFGILRLWRLHRVGILFARLE. Residues 196–209 lie on the Cytoplasmic side of the membrane; sequence KDRKFSYFWVRCVK. A helical transmembrane segment spans residues 210 to 230; it reads LVCVTLFAVHCSACFYYLLAD. The Extracellular segment spans residues 231–257; that stretch reads RYPDPTNTWISAYMPNFHKASIWSRYV. An intramembrane region (pore-forming) is located at residues 258–277; sequence ASMYWSITTLSTVGYGDMHA. Residues 278-288 lie on the Extracellular side of the membrane; that stretch reads ENTGEMVFTTT. Residues 289–309 traverse the membrane as a helical segment; the sequence is YMLFNLGLTAYIIGNMTNLVV. At 310 to 907 the chain is on the cytoplasmic side; sequence HGTSRTRKFR…VPPENRSRNQ (598 aa). 388–512 provides a ligand contact to a nucleoside 3',5'-cyclic phosphate; it reads LFEGVSNDLI…TIVMNNLIQY (125 aa). ANK repeat units follow at residues 539–568, 572–601, 605–634, 636–665, and 670–699; these read DFPI…DPNE, YGRT…DSNS, EGRV…DLSG, DAAP…DVSG, and DGTT…DADA. Disordered stretches follow at residues 726–779 and 801–824; these read ATRH…TPQR and GGYR…SSPP. A compositionally biased stretch (low complexity) spans 754-776; sequence SSPSSSSRRGRTSSTSAASARST. Gly residues predominate over residues 803–812; sequence YRGGGGGGGA. One can recognise a KHA domain in the interval 827–907; it reads RVAISCPESR…VPPENRSRNQ (81 aa).

The protein belongs to the potassium channel family. Plant (TC 1.A.1.4) subfamily.

The protein resides in the membrane. Its function is as follows. Probable inward-rectifying potassium channel. Assuming opened or closed conformations in response to the voltage difference across the membrane, the channel is activated by hyperpolarization. The chain is Potassium channel AKT3 from Oryza sativa subsp. japonica (Rice).